We begin with the raw amino-acid sequence, 119 residues long: Ribonuclease P protein component (119 aa).

The protein belongs to the RnpA family. In terms of assembly, consists of a catalytic RNA component (M1 or rnpB) and a protein subunit.

The catalysed reaction is Endonucleolytic cleavage of RNA, removing 5'-extranucleotides from tRNA precursor.. RNaseP catalyzes the removal of the 5'-leader sequence from pre-tRNA to produce the mature 5'-terminus. It can also cleave other RNA substrates such as 4.5S RNA. The protein component plays an auxiliary but essential role in vivo by binding to the 5'-leader sequence and broadening the substrate specificity of the ribozyme. The polypeptide is Ribonuclease P protein component (Klebsiella pneumoniae (strain 342)).